Here is a 225-residue protein sequence, read N- to C-terminus: uncharacterized protein (225 aa).

Residues 166–214 form the PCI domain; the sequence is LNSDVIKDKILAIIENVGEITYEELAEKINIPEEDLEKYLSELKESGDI.

This is an uncharacterized protein from Methanocaldococcus jannaschii (strain ATCC 43067 / DSM 2661 / JAL-1 / JCM 10045 / NBRC 100440) (Methanococcus jannaschii).